The primary structure comprises 2104 residues: Myosin type-2 heavy chain 2 (2104 aa).

Residues 35–85 (DERTWIWIPDSKESFVKAWIVEDLGEKYRVKLERDGSERIVDGFDAEKVNP) form the Myosin N-terminal SH3-like domain. The 679-residue stretch at 89 to 767 (DMVDDMAALT…VLGSLEDRRN (679 aa)) folds into the Myosin motor domain. An ATP-binding site is contributed by 182–189 (GESGAGKT). The interval 646 to 660 (LSSLMHQLEATQPHF) is actin-binding. A coiled-coil region spans residues 829–2104 (LGTTQTDEYL…RSNRSPSVLR (1276 aa)). 2 disordered regions span residues 1245 to 1278 (NRSVTQHTLDGNSPHPSFEEKHSGDPLKRIDGNN) and 1398 to 1426 (MEFTGLKPLSPSKISNLPSSQPGSPSKRS). Residues 1246-1259 (RSVTQHTLDGNSPH) show a composition bias toward polar residues. A compositionally biased stretch (basic and acidic residues) spans 1261–1278 (SFEEKHSGDPLKRIDGNN). Polar residues predominate over residues 1409–1424 (SKISNLPSSQPGSPSK). Position 1421 is a phosphoserine (serine 1421).

This sequence belongs to the TRAFAC class myosin-kinesin ATPase superfamily. Myosin family. Binds to cdc4 and rlc1.

Stabilizes the F-actin cables forming the F-actin ring that surrounds the nucleus during interphase. May work in conjunction with myo2. The polypeptide is Myosin type-2 heavy chain 2 (myo3) (Schizosaccharomyces pombe (strain 972 / ATCC 24843) (Fission yeast)).